Consider the following 138-residue polypeptide: Small ribosomal subunit protein uS11c (138 aa).

The disordered stretch occupies residues 1–22; it reads MTKPIPRIGSRRSGRIGSRKAG. A compositionally biased stretch (basic residues) spans 9–22; sequence GSRRSGRIGSRKAG.

Belongs to the universal ribosomal protein uS11 family. Part of the 30S ribosomal subunit.

It is found in the plastid. The protein localises to the chloroplast. The chain is Small ribosomal subunit protein uS11c from Piper cenocladum (Ant piper).